A 231-amino-acid chain; its full sequence is Ureidoacrylate amidohydrolase RutB (231 aa).

The active-site Proton acceptor is D25. K134 is an active-site residue. C167 (nucleophile) is an active-site residue.

It belongs to the isochorismatase family. RutB subfamily.

It carries out the reaction (Z)-3-ureidoacrylate + H2O + H(+) = (Z)-3-aminoacrylate + NH4(+) + CO2. The enzyme catalyses (Z)-3-ureidoacrylate + H2O = (Z)-3-aminoacrylate + carbamate + H(+). It catalyses the reaction (Z)-2-methylureidoacrylate + H2O + H(+) = (Z)-2-methylaminoacrylate + NH4(+) + CO2. In terms of biological role, hydrolyzes ureidoacrylate to form aminoacrylate and carbamate. The carbamate hydrolyzes spontaneously, thereby releasing one of the nitrogen atoms of the pyrimidine ring as ammonia and one of its carbon atoms as CO2. The sequence is that of Ureidoacrylate amidohydrolase RutB from Escherichia coli O157:H7 (strain EC4115 / EHEC).